A 482-amino-acid polypeptide reads, in one-letter code: Anthocyanin 3'-O-beta-glucosyltransferase (482 aa).

His-16 acts as the Proton acceptor in catalysis. His-16 is a binding site for an anthocyanidin. The Charge relay role is filled by Asp-119. Residues Ala-349, Gln-351, His-366, Trp-369, Asn-370, Ser-371, and Glu-374 each contribute to the UDP-alpha-D-glucose site. Ala-389 is a binding site for an anthocyanidin. The UDP-alpha-D-glucose site is built by Glu-390 and Gln-391.

This sequence belongs to the UDP-glycosyltransferase family. The N-terminus is blocked. As to expression, abundant in petals and barely detected in leaves.

The enzyme catalyses delphinidin 3,5-bis-O-beta-D-glucoside + UDP-alpha-D-glucose = delphinidin 3,3',5-tri-O-beta-D-glucoside + UDP + H(+). Its function is as follows. Specifically glucosylates the 3'-hydroxy group of delphinidin 3,5-di-O-glucoside to produce gentiodelphin. Shows a strict specificity for UDP-glucose as donor. This is Anthocyanin 3'-O-beta-glucosyltransferase from Gentiana triflora (Clustered gentian).